The primary structure comprises 145 residues: Large ribosomal subunit protein uL11 (145 aa).

This sequence belongs to the universal ribosomal protein uL11 family. Part of the ribosomal stalk of the 50S ribosomal subunit. Interacts with L10 and the large rRNA to form the base of the stalk. L10 forms an elongated spine to which L12 dimers bind in a sequential fashion forming a multimeric L10(L12)X complex. Post-translationally, one or more lysine residues are methylated.

Its function is as follows. Forms part of the ribosomal stalk which helps the ribosome interact with GTP-bound translation factors. In Rubrobacter xylanophilus (strain DSM 9941 / JCM 11954 / NBRC 16129 / PRD-1), this protein is Large ribosomal subunit protein uL11.